A 74-amino-acid chain; its full sequence is Alpha-elapitoxin-Aa2d (74 aa).

5 disulfide bridges follow: cysteine 3–cysteine 21, cysteine 14–cysteine 42, cysteine 27–cysteine 31, cysteine 46–cysteine 57, and cysteine 58–cysteine 63.

It belongs to the three-finger toxin family. Long-chain subfamily. Type II alpha-neurotoxin sub-subfamily. Expressed by the venom gland.

The protein resides in the secreted. Its function is as follows. Binds with high affinity to muscular (alpha-1/CHRNA1) and neuronal (alpha-7/CHRNA7) nicotinic acetylcholine receptor (nAChR) and inhibits acetylcholine from binding to the receptor, thereby impairing neuromuscular and neuronal transmission. The polypeptide is Alpha-elapitoxin-Aa2d (Acanthophis antarcticus (Common death adder)).